A 279-amino-acid chain; its full sequence is Large ribosomal subunit protein uL2 (279 aa).

The interval 223 to 279 is disordered; that stretch reads MAMNPVDHPMGGGEGKSKSGGGRKHPKSPWGQLAKGLKTRNKKKASSKLIVRGRKSK. Positions 232–242 are enriched in gly residues; it reads MGGGEGKSKSG. Residues 259 to 279 are compositionally biased toward basic residues; the sequence is LKTRNKKKASSKLIVRGRKSK.

Belongs to the universal ribosomal protein uL2 family. Part of the 50S ribosomal subunit. Forms a bridge to the 30S subunit in the 70S ribosome.

Functionally, one of the primary rRNA binding proteins. Required for association of the 30S and 50S subunits to form the 70S ribosome, for tRNA binding and peptide bond formation. It has been suggested to have peptidyltransferase activity; this is somewhat controversial. Makes several contacts with the 16S rRNA in the 70S ribosome. The sequence is that of Large ribosomal subunit protein uL2 from Prosthecochloris aestuarii (strain DSM 271 / SK 413).